The chain runs to 742 residues: 5-methyltetrahydropteroyltriglutamate--homocysteine methyltransferase (742 aa).

5-methyltetrahydropteroyltri-L-glutamate-binding positions include 18 to 21 (REWK) and K112. Residues 420–422 (IGS) and E473 contribute to the L-homocysteine site. L-methionine is bound by residues 420–422 (IGS) and E473. W550 contacts 5-methyltetrahydropteroyltri-L-glutamate. An L-homocysteine-binding site is contributed by D588. An L-methionine-binding site is contributed by D588. E594 is a 5-methyltetrahydropteroyltri-L-glutamate binding site. Residues H630, C632, and E654 each coordinate Zn(2+). Residue H683 is the Proton donor of the active site. Zn(2+) is bound at residue C715.

Belongs to the vitamin-B12 independent methionine synthase family. It depends on Zn(2+) as a cofactor.

The catalysed reaction is 5-methyltetrahydropteroyltri-L-glutamate + L-homocysteine = tetrahydropteroyltri-L-glutamate + L-methionine. The protein operates within amino-acid biosynthesis; L-methionine biosynthesis via de novo pathway; L-methionine from L-homocysteine (MetE route): step 1/1. Catalyzes the transfer of a methyl group from 5-methyltetrahydrofolate to homocysteine resulting in methionine formation. This chain is 5-methyltetrahydropteroyltriglutamate--homocysteine methyltransferase, found in Staphylococcus aureus (strain Mu3 / ATCC 700698).